Reading from the N-terminus, the 315-residue chain is 4-hydroxy-3-methylbut-2-enyl diphosphate reductase (315 aa).

Cys-12 provides a ligand contact to [4Fe-4S] cluster. (2E)-4-hydroxy-3-methylbut-2-enyl diphosphate is bound by residues His-41 and His-74. Residues His-41 and His-74 each coordinate dimethylallyl diphosphate. Isopentenyl diphosphate is bound by residues His-41 and His-74. Residue Cys-96 participates in [4Fe-4S] cluster binding. His-124 contacts (2E)-4-hydroxy-3-methylbut-2-enyl diphosphate. His-124 contributes to the dimethylallyl diphosphate binding site. His-124 serves as a coordination point for isopentenyl diphosphate. Glu-126 functions as the Proton donor in the catalytic mechanism. Thr-168 is a binding site for (2E)-4-hydroxy-3-methylbut-2-enyl diphosphate. Cys-198 provides a ligand contact to [4Fe-4S] cluster. Positions 226, 227, 228, and 270 each coordinate (2E)-4-hydroxy-3-methylbut-2-enyl diphosphate. Dimethylallyl diphosphate-binding residues include Ser-226, Ser-227, Asn-228, and Ser-270. Residues Ser-226, Ser-227, Asn-228, and Ser-270 each contribute to the isopentenyl diphosphate site.

The protein belongs to the IspH family. It depends on [4Fe-4S] cluster as a cofactor.

It catalyses the reaction isopentenyl diphosphate + 2 oxidized [2Fe-2S]-[ferredoxin] + H2O = (2E)-4-hydroxy-3-methylbut-2-enyl diphosphate + 2 reduced [2Fe-2S]-[ferredoxin] + 2 H(+). It carries out the reaction dimethylallyl diphosphate + 2 oxidized [2Fe-2S]-[ferredoxin] + H2O = (2E)-4-hydroxy-3-methylbut-2-enyl diphosphate + 2 reduced [2Fe-2S]-[ferredoxin] + 2 H(+). Its pathway is isoprenoid biosynthesis; dimethylallyl diphosphate biosynthesis; dimethylallyl diphosphate from (2E)-4-hydroxy-3-methylbutenyl diphosphate: step 1/1. It functions in the pathway isoprenoid biosynthesis; isopentenyl diphosphate biosynthesis via DXP pathway; isopentenyl diphosphate from 1-deoxy-D-xylulose 5-phosphate: step 6/6. In terms of biological role, catalyzes the conversion of 1-hydroxy-2-methyl-2-(E)-butenyl 4-diphosphate (HMBPP) into a mixture of isopentenyl diphosphate (IPP) and dimethylallyl diphosphate (DMAPP). Acts in the terminal step of the DOXP/MEP pathway for isoprenoid precursor biosynthesis. The polypeptide is 4-hydroxy-3-methylbut-2-enyl diphosphate reductase (Pseudomonas savastanoi pv. phaseolicola (strain 1448A / Race 6) (Pseudomonas syringae pv. phaseolicola (strain 1448A / Race 6))).